The following is a 787-amino-acid chain: Protocadherin beta-15 (787 aa).

The signal sequence occupies residues 1–26 (MEPAGERFPEQRQVLILLLLLEVTLA). At 27–690 (GWEPRRYSVM…AQADSLTVYL (664 aa)) the chain is on the extracellular side. Cadherin domains lie at 35–133 (VMEE…SPEF), 138–242 (ITLK…APEF), 247–347 (YEVQ…FPEL), 352–451 (LTSP…APAF), and 456–561 (YTLF…SPFV). 2 N-linked (GlcNAc...) asparagine glycosylation sites follow: Asn-418 and Asn-436. N-linked (GlcNAc...) asparagine glycosylation is present at Asn-567. The region spanning 568–671 (GSAPCTELVP…LVDGFSQPYL (104 aa)) is the Cadherin 6 domain. A helical transmembrane segment spans residues 691–711 (VVALASVSSLFLFSVLLFVAV). Residues 712–787 (RLCRRSRAAS…DSRRKSEFLE (76 aa)) lie on the Cytoplasmic side of the membrane.

The protein resides in the cell membrane. Its function is as follows. Potential calcium-dependent cell-adhesion protein. May be involved in the establishment and maintenance of specific neuronal connections in the brain. The polypeptide is Protocadherin beta-15 (PCDHB15) (Pan troglodytes (Chimpanzee)).